A 136-amino-acid chain; its full sequence is Crossover junction endodeoxyribonuclease Hjc (136 aa).

Residue Glu-9 participates in Mg(2+) binding. Ser-29 is an active-site residue. 2 residues coordinate Mg(2+): Asp-38 and Glu-51.

It belongs to the Holliday junction resolvase Hjc family. As to quaternary structure, homodimer. Mg(2+) serves as cofactor.

It catalyses the reaction Endonucleolytic cleavage at a junction such as a reciprocal single-stranded crossover between two homologous DNA duplexes (Holliday junction).. A structure-specific endonuclease that resolves Holliday junction (HJ) intermediates during genetic recombination. Cleaves 4-way DNA junctions introducing paired nicks in opposing strands, leaving a 5'-terminal phosphate and a 3'-terminal hydroxyl group that are subsequently ligated to produce recombinant products. The polypeptide is Crossover junction endodeoxyribonuclease Hjc (Archaeoglobus fulgidus (strain ATCC 49558 / DSM 4304 / JCM 9628 / NBRC 100126 / VC-16)).